The following is a 406-amino-acid chain: Phosphopentomutase (406 aa).

The Mn(2+) site is built by aspartate 10, aspartate 305, histidine 310, aspartate 346, histidine 347, and histidine 358.

The protein belongs to the phosphopentomutase family. The cofactor is Mn(2+).

The protein resides in the cytoplasm. It carries out the reaction 2-deoxy-alpha-D-ribose 1-phosphate = 2-deoxy-D-ribose 5-phosphate. The enzyme catalyses alpha-D-ribose 1-phosphate = D-ribose 5-phosphate. Its pathway is carbohydrate degradation; 2-deoxy-D-ribose 1-phosphate degradation; D-glyceraldehyde 3-phosphate and acetaldehyde from 2-deoxy-alpha-D-ribose 1-phosphate: step 1/2. In terms of biological role, isomerase that catalyzes the conversion of deoxy-ribose 1-phosphate (dRib-1-P) and ribose 1-phosphate (Rib-1-P) to deoxy-ribose 5-phosphate (dRib-5-P) and ribose 5-phosphate (Rib-5-P), respectively. This is Phosphopentomutase from Aliivibrio fischeri (strain MJ11) (Vibrio fischeri).